A 970-amino-acid polypeptide reads, in one-letter code: Protein translocase subunit SecA (970 aa).

ATP-binding positions include Gln99, 117–121, and Asp631; that span reads GEGKT.

The protein belongs to the SecA family. As to quaternary structure, monomer and homodimer. Part of the essential Sec protein translocation apparatus which comprises SecA, SecYEG and auxiliary proteins SecDF. Other proteins may also be involved.

Its subcellular location is the cell inner membrane. It is found in the cytoplasm. The catalysed reaction is ATP + H2O + cellular proteinSide 1 = ADP + phosphate + cellular proteinSide 2.. In terms of biological role, part of the Sec protein translocase complex. Interacts with the SecYEG preprotein conducting channel. Has a central role in coupling the hydrolysis of ATP to the transfer of proteins into and across the cell membrane, serving as an ATP-driven molecular motor driving the stepwise translocation of polypeptide chains across the membrane. The protein is Protein translocase subunit SecA of Chlamydia pneumoniae (Chlamydophila pneumoniae).